Reading from the N-terminus, the 104-residue chain is Zinc-containing ferredoxin-1 (104 aa).

The interval 2–37 (GIDPNYRTNRQVVGEHSGHKVYGPVEPPKVLGIHGT) is N-terminal extension. Residues histidine 17 and histidine 20 each contribute to the Zn(2+) site. Lysine 30 is modified (N6-methyllysine). Residue histidine 35 participates in Zn(2+) binding. 4Fe-4S ferredoxin-type domains lie at 38–66 (IVGV…WYDT) and 75–104 (KADP…VKPP). [3Fe-4S] cluster is bound by residues cysteine 46 and cysteine 52. Cysteine 56 is a [4Fe-4S] cluster binding site. Aspartate 77 is a Zn(2+) binding site. The [4Fe-4S] cluster site is built by cysteine 84, cysteine 87, and cysteine 90. A [3Fe-4S] cluster-binding site is contributed by cysteine 94.

The cofactor is [3Fe-4S] cluster. Requires [4Fe-4S] cluster as cofactor. Zn(2+) is required as a cofactor.

Ferredoxins are iron-sulfur proteins that transfer electrons in a wide variety of metabolic reactions. This Sulfurisphaera tokodaii (strain DSM 16993 / JCM 10545 / NBRC 100140 / 7) (Sulfolobus tokodaii) protein is Zinc-containing ferredoxin-1 (zfx1).